The primary structure comprises 77 residues: MKEQKLIHEGLITESLPNGMFWVRLDNEDLVLGYVSGRIRRSFIRILPGDRVKIEVSRYDSTRGRIIYRLRNKDSND.

The S1-like domain occupies 1–71 (MKEQKLIHEG…TRGRIIYRLR (71 aa)).

Belongs to the IF-1 family. As to quaternary structure, component of the 30S ribosomal translation pre-initiation complex which assembles on the 30S ribosome in the order IF-2 and IF-3, IF-1 and N-formylmethionyl-tRNA(fMet); mRNA recruitment can occur at any time during PIC assembly.

Its subcellular location is the plastid. The protein localises to the chloroplast. Functionally, one of the essential components for the initiation of protein synthesis. Stabilizes the binding of IF-2 and IF-3 on the 30S subunit to which N-formylmethionyl-tRNA(fMet) subsequently binds. Helps modulate mRNA selection, yielding the 30S pre-initiation complex (PIC). Upon addition of the 50S ribosomal subunit IF-1, IF-2 and IF-3 are released leaving the mature 70S translation initiation complex. The polypeptide is Translation initiation factor IF-1, chloroplastic (Cabomba caroliniana (Carolina fanwort)).